Here is a 90-residue protein sequence, read N- to C-terminus: RING finger protein Z (90 aa).

A lipid anchor (N-myristoyl glycine; by host) is attached at Gly2. The RING-type; atypical zinc finger occupies Cys32–Cys68. Residues Pro85–Tyr88 carry the PPXY motif motif.

Belongs to the arenaviridae Z protein family. Interacts with protein NP; this interaction probably directs the encapsidated genome to budding sites. Interacts (via RING-type zinc finger) with polymerase L; this interaction inhibits viral transcription and replication, Z partially blocks the product exit tunnel for the releasing nascent RNA product. Interacts with the glycoprotein complex; this interaction plays a role in virion budding. Interacts (via RING-type zinc finger) with host EIF4E; this interaction results in conformational changes of both interacting proteins and reduces EIF4E affinity for its substrate, the 5'-m7 G cap structure. Interacts (via late-budding domain) with host TSG101; this interaction is essential for budding and release of viral particles. Interacts with host RPLP0; this interaction may serve to load ribosome-like particles inside the virion. Interacts with host PML; this interaction induces PML bodies redistribution in the cytoplasm upon viral infection. Myristoylation is required for the role of RING finger protein Z in assembly and budding.

The protein localises to the virion. The protein resides in the host cytoplasm. Its subcellular location is the host perinuclear region. It localises to the host cell membrane. Plays a crucial role in virion assembly and budding. Expressed late in the virus life cycle, it acts as an inhibitor of viral transcription and RNA synthesis by interacting with the viral polymerase L. Presumably recruits the NP encapsidated genome to cellular membranes at budding sites via direct interaction with NP. Plays critical roles in the final steps of viral release by interacting with host TSG101, a member of the vacuolar protein-sorting pathway and using other cellular host proteins involved in vesicle formation pathway. The budding of the virus progeny occurs after association of protein Z with the viral glycoprotein complex SSP-GP1-GP2 at the cell periphery, step that requires myristoylation of protein Z. Also selectively represses protein production by associating with host EIF4E. In cell-based minigenome assay, has an inhibitory effect on the ribonucleoprotein machinery (vRNP), which is responsible for the replication and transcription of the viral genome. In Homo sapiens (Human), this protein is RING finger protein Z.